The sequence spans 561 residues: Putative transport protein YbjL (561 aa).

5 helical membrane-spanning segments follow: residues 8-28, 32-52, 66-86, 94-114, and 158-178; these read LLNGNYILLLFVVLALGLCLG, LGSVQLGNSIGVLVVSLLLGQ, FMLFIFCVGVEAGPNFFSIFF, MLALVMVGSALLIALGLGKLF, and NLSLGYALTYLIGLVSLIVGA. 2 RCK C-terminal domains span residues 200–288 and 292–373; these read RGLD…SLRN and VFDR…RIGF. 5 helical membrane passes run 383-403, 406-426, 447-467, 475-495, and 540-560; these read LLAFCAFFIIGLMIGMITFQF, FSFGIGNAAGLLFAGIMLGFL, FGLMVFMAGVGLSAGSGISNG, MLIAGLVVSLVPVVICFLFGA, and AIANVLLTLAGTLIVIIWPGL.

Belongs to the AAE transporter (TC 2.A.81) family. YbjL subfamily.

Its subcellular location is the cell membrane. This is Putative transport protein YbjL from Salmonella gallinarum (strain 287/91 / NCTC 13346).